Consider the following 104-residue polypeptide: Nucleoid-associated protein Dtur_0258 (104 aa).

Residues Glu84–Phe104 form a disordered region.

This sequence belongs to the YbaB/EbfC family. In terms of assembly, homodimer.

The protein resides in the cytoplasm. It localises to the nucleoid. Binds to DNA and alters its conformation. May be involved in regulation of gene expression, nucleoid organization and DNA protection. The sequence is that of Nucleoid-associated protein Dtur_0258 from Dictyoglomus turgidum (strain DSM 6724 / Z-1310).